The sequence spans 390 residues: Dual-specificity RNA methyltransferase RlmN (390 aa).

The Proton acceptor role is filled by Glu-110. Positions 116 to 355 (EADRATLCVS…VIIRKTRGDD (240 aa)) constitute a Radical SAM core domain. Cys-123 and Cys-360 are joined by a disulfide. 3 residues coordinate [4Fe-4S] cluster: Cys-130, Cys-134, and Cys-137. Residues 184-185 (GE), Ser-216, 238-240 (SLH), and Asn-317 each bind S-adenosyl-L-methionine. The S-methylcysteine intermediate role is filled by Cys-360.

Belongs to the radical SAM superfamily. RlmN family. [4Fe-4S] cluster serves as cofactor.

The protein resides in the cytoplasm. It carries out the reaction adenosine(2503) in 23S rRNA + 2 reduced [2Fe-2S]-[ferredoxin] + 2 S-adenosyl-L-methionine = 2-methyladenosine(2503) in 23S rRNA + 5'-deoxyadenosine + L-methionine + 2 oxidized [2Fe-2S]-[ferredoxin] + S-adenosyl-L-homocysteine. The catalysed reaction is adenosine(37) in tRNA + 2 reduced [2Fe-2S]-[ferredoxin] + 2 S-adenosyl-L-methionine = 2-methyladenosine(37) in tRNA + 5'-deoxyadenosine + L-methionine + 2 oxidized [2Fe-2S]-[ferredoxin] + S-adenosyl-L-homocysteine. Its function is as follows. Specifically methylates position 2 of adenine 2503 in 23S rRNA and position 2 of adenine 37 in tRNAs. m2A2503 modification seems to play a crucial role in the proofreading step occurring at the peptidyl transferase center and thus would serve to optimize ribosomal fidelity. This is Dual-specificity RNA methyltransferase RlmN from Haemophilus influenzae (strain PittEE).